We begin with the raw amino-acid sequence, 227 residues long: Large ribosomal subunit protein uL1 (227 aa).

Belongs to the universal ribosomal protein uL1 family. As to quaternary structure, part of the 50S ribosomal subunit.

Its function is as follows. Binds directly to 23S rRNA. The L1 stalk is quite mobile in the ribosome, and is involved in E site tRNA release. Functionally, protein L1 is also a translational repressor protein, it controls the translation of the L11 operon by binding to its mRNA. The protein is Large ribosomal subunit protein uL1 of Brevibacillus brevis (strain 47 / JCM 6285 / NBRC 100599).